Consider the following 272-residue polypeptide: MAASPPLPTSIDGGQVLDDMEVVEMKYLFGKVLMPSDVSWDTEQLVIPDEHVGKLLDMVVMNRPEGGFFVVVVEDGEVTGKLWLFRYWKRDDVHCLTKGWGCYAREKGLRAGDTVSFFHSTACGRFFICCRCTCMSFLSLPTTSHRIHGSSVLPQPRAAQEAHHPFSGHATLCLGNKASDHSAPARHATASLGCAAAQPPQVPPTPTPRRRRRSMMVHPEPPEHTTDGMPVILESMALVSTPPVAKRVRLFGVYIDVPPLRPGGEATQDFNP.

Positions G30–C134 form a DNA-binding region, TF-B3. The disordered stretch occupies residues T189–D227.

Its subcellular location is the nucleus. In Oryza sativa subsp. japonica (Rice), this protein is Putative B3 domain-containing protein Os02g0455900.